Reading from the N-terminus, the 432-residue chain is Chaperone SurA (432 aa).

Positions 1–26 (MKKIASFCSAAVLIASSFLLNNTVQA) are cleaved as a signal peptide. PpiC domains are found at residues 176-277 (QTEY…KVQD) and 286-386 (VQEV…EVTG).

The protein resides in the periplasm. The catalysed reaction is [protein]-peptidylproline (omega=180) = [protein]-peptidylproline (omega=0). In terms of biological role, chaperone involved in the correct folding and assembly of outer membrane proteins. Recognizes specific patterns of aromatic residues and the orientation of their side chains, which are found more frequently in integral outer membrane proteins. May act in both early periplasmic and late outer membrane-associated steps of protein maturation. The protein is Chaperone SurA of Idiomarina loihiensis (strain ATCC BAA-735 / DSM 15497 / L2-TR).